The primary structure comprises 289 residues: MKLLTACITPFLPNYEIDFLSFERILYSQKKEGNGVVLLGSTGESLALTVKEKESLVAFACSLKLQIPIVVGVSGTSLNDALEWMKICHAYPIDGFLIPSPIYTKPGVYGQTLWFESLLNTTDKPVILYNIPSRAGTPLYLETVGALASHPSCYGVKDSGGSIERCREYAQIAPHLVVYCGDDSLWPQMHSYGAQGLISVLSNSWPREARSYVDNPYQESNTLLWQELSLWLSLTTNPIAIKAVLAYKQDIAHSVLRLPLSIADLQNAEALPNVVEKMLKWSQIYPVHT.

Pyruvate is bound at residue T42. Y129 (proton donor/acceptor) is an active-site residue. The Schiff-base intermediate with substrate role is filled by K157. I198 is a pyruvate binding site.

This sequence belongs to the DapA family. Homotetramer; dimer of dimers.

It is found in the cytoplasm. It catalyses the reaction L-aspartate 4-semialdehyde + pyruvate = (2S,4S)-4-hydroxy-2,3,4,5-tetrahydrodipicolinate + H2O + H(+). It functions in the pathway amino-acid biosynthesis; L-lysine biosynthesis via DAP pathway; (S)-tetrahydrodipicolinate from L-aspartate: step 3/4. Catalyzes the condensation of (S)-aspartate-beta-semialdehyde [(S)-ASA] and pyruvate to 4-hydroxy-tetrahydrodipicolinate (HTPA). The protein is 4-hydroxy-tetrahydrodipicolinate synthase of Chlamydia caviae (strain ATCC VR-813 / DSM 19441 / 03DC25 / GPIC) (Chlamydophila caviae).